Reading from the N-terminus, the 840-residue chain is Probable inorganic carbon transporter subunit DabA (840 aa).

Positions 355, 357, 539, and 554 each coordinate Zn(2+).

This sequence belongs to the inorganic carbon transporter (TC 9.A.2) DabA family. In terms of assembly, forms a complex with DabB. Zn(2+) serves as cofactor.

The protein localises to the cell membrane. Its function is as follows. Part of an energy-coupled inorganic carbon pump. This is Probable inorganic carbon transporter subunit DabA from Roseiflexus castenholzii (strain DSM 13941 / HLO8).